Reading from the N-terminus, the 325-residue chain is L-lactate dehydrogenase 1 (325 aa).

Residues valine 17, aspartate 38, lysine 43, tyrosine 68, and 82 to 83 (GA) each bind NAD(+). Substrate contacts are provided by residues glutamine 85, arginine 91, and 123–126 (NPVD). Residues 121–123 (AAN) and serine 146 each bind NAD(+). 151–154 (DTAR) contributes to the substrate binding site. 2 residues coordinate beta-D-fructose 1,6-bisphosphate: arginine 156 and histidine 171. Residue histidine 178 is the Proton acceptor of the active site. Residue tyrosine 223 is modified to Phosphotyrosine. Position 232 (threonine 232) interacts with substrate.

It belongs to the LDH/MDH superfamily. LDH family. Homotetramer.

It is found in the cytoplasm. The catalysed reaction is (S)-lactate + NAD(+) = pyruvate + NADH + H(+). It functions in the pathway fermentation; pyruvate fermentation to lactate; (S)-lactate from pyruvate: step 1/1. With respect to regulation, allosterically activated by fructose 1,6-bisphosphate (FBP). Its function is as follows. Catalyzes the conversion of lactate to pyruvate. This is L-lactate dehydrogenase 1 from Lactococcus lactis subsp. lactis (strain IL1403) (Streptococcus lactis).